The primary structure comprises 267 residues: uncharacterized protein (267 aa).

This is an uncharacterized protein from Escherichia coli (strain K12).